The chain runs to 165 residues: 3-isopropylmalate dehydratase small subunit (165 aa).

The protein belongs to the LeuD family. LeuD type 2 subfamily. As to quaternary structure, heterodimer of LeuC and LeuD.

It catalyses the reaction (2R,3S)-3-isopropylmalate = (2S)-2-isopropylmalate. The protein operates within amino-acid biosynthesis; L-leucine biosynthesis; L-leucine from 3-methyl-2-oxobutanoate: step 2/4. Functionally, catalyzes the isomerization between 2-isopropylmalate and 3-isopropylmalate, via the formation of 2-isopropylmaleate. This is 3-isopropylmalate dehydratase small subunit from Halothermothrix orenii (strain H 168 / OCM 544 / DSM 9562).